Here is a 228-residue protein sequence, read N- to C-terminus: Urease accessory protein UreF (228 aa).

This sequence belongs to the UreF family. In terms of assembly, ureD, UreF and UreG form a complex that acts as a GTP-hydrolysis-dependent molecular chaperone, activating the urease apoprotein by helping to assemble the nickel containing metallocenter of UreC. The UreE protein probably delivers the nickel.

It is found in the cytoplasm. Functionally, required for maturation of urease via the functional incorporation of the urease nickel metallocenter. This chain is Urease accessory protein UreF, found in Dechloromonas aromatica (strain RCB).